The sequence spans 256 residues: Major prion protein (256 aa).

An N-terminal signal peptide occupies residues 1–24 (MVKSHIGSWILVLFVAMWSDVGLC). The tract at residues 25–41 (KKRPKPGGGWNTGGSRY) is interaction with ADGRG6. The interaction with GRB2, ERI3 and SYN1 stretch occupies residues 25-233 (KKRPKPGGGW…ESEAYYQRRA (209 aa)). Positions 28-110 (PKPGGGWNTG…QWNKPSKPKT (83 aa)) are disordered. 5 tandem repeats follow at residues 54–62 (PQGGGGWGQ), 63–70 (PHGGGWGQ), 71–78 (PHGGGWGQ), 79–86 (PHGGGWGQ), and 87–95 (PHGGGGWGQ). Positions 54 to 95 (PQGGGGWGQPHGGGWGQPHGGGWGQPHGGGWGQPHGGGGWGQ) are 5 X 8 AA tandem repeats of P-H-G-G-G-W-G-Q. Gly residues predominate over residues 55-97 (QGGGGWGQPHGGGWGQPHGGGWGQPHGGGWGQPHGGGGWGQGG). 12 residues coordinate Cu(2+): His64, Gly65, Gly66, His72, Gly73, Gly74, His80, Gly81, Gly82, His88, Gly90, and Gly91. Residues Cys182 and Cys217 are joined by a disulfide bond. Asn184 and Asn200 each carry an N-linked (GlcNAc...) asparagine glycan. The GPI-anchor amidated alanine moiety is linked to residue Ala233. A propeptide spans 234–256 (SAILFSSPPVILLISFLIFLIVG) (removed in mature form).

This sequence belongs to the prion family. As to quaternary structure, monomer and homodimer. Has a tendency to aggregate into amyloid fibrils containing a cross-beta spine, formed by a steric zipper of superposed beta-strands. Soluble oligomers may represent an intermediate stage on the path to fibril formation. Copper binding may promote oligomerization. Interacts with GRB2, APP, ERI3/PRNPIP and SYN1. Mislocalized cytosolically exposed PrP interacts with MGRN1; this interaction alters MGRN1 subcellular location and causes lysosomal enlargement. Interacts with APP. Interacts with KIAA1191. Interacts with ADGRG6.

The protein localises to the cell membrane. Its subcellular location is the golgi apparatus. In terms of biological role, its primary physiological function is unclear. May play a role in neuronal development and synaptic plasticity. May be required for neuronal myelin sheath maintenance. May promote myelin homeostasis through acting as an agonist for ADGRG6 receptor. May play a role in iron uptake and iron homeostasis. Soluble oligomers are toxic to cultured neuroblastoma cells and induce apoptosis (in vitro). Association with GPC1 (via its heparan sulfate chains) targets PRNP to lipid rafts. Also provides Cu(2+) or Zn(2+) for the ascorbate-mediated GPC1 deaminase degradation of its heparan sulfate side chains. In Felis catus (Cat), this protein is Major prion protein (PRNP).